The primary structure comprises 190 residues: Segregation and condensation protein B (190 aa).

It belongs to the ScpB family. As to quaternary structure, homodimer. Homodimerization may be required to stabilize the binding of ScpA to the Smc head domains. Component of a cohesin-like complex composed of ScpA, ScpB and the Smc homodimer, in which ScpA and ScpB bind to the head domain of Smc. The presence of the three proteins is required for the association of the complex with DNA.

Its subcellular location is the cytoplasm. Functionally, participates in chromosomal partition during cell division. May act via the formation of a condensin-like complex containing Smc and ScpA that pull DNA away from mid-cell into both cell halves. The chain is Segregation and condensation protein B from Bacillus cereus (strain G9842).